Here is a 602-residue protein sequence, read N- to C-terminus: PEX5-related protein (602 aa).

Disordered stretches follow at residues 94–140 (VSQT…PETS) and 167–206 (HLMA…LNSE). A phosphoserine mark is found at Ser181, Ser229, Ser233, and Ser237. TPR repeat units lie at residues 302–335 (WPGA…DPGN), 336–369 (AEAW…QPNN), and 371–403 (KALM…NPKY). Phosphoserine occurs at positions 421 and 423. TPR repeat units lie at residues 450 to 483 (PDLQ…RPED), 485 to 517 (SLWN…QPGF), and 519 to 551 (RSRY…QRKS).

Belongs to the peroxisomal targeting signal receptor family. Forms an obligate 4:4 complex with HCN2. Interacts with RAB8B. Interacts with HCN3. Interacts with HCN4 with a 4:4 HCN4:PEX5L stoichiometry; reduces the effects of cAMP on the voltage-dependence and rate of activation of HCN4. Brain specific.

The protein localises to the cytoplasm. Its subcellular location is the membrane. Functionally, accessory subunit of hyperpolarization-activated cyclic nucleotide-gated (HCN) channels, regulating their cell-surface expression and cyclic nucleotide dependence. In Rattus norvegicus (Rat), this protein is PEX5-related protein (Pex5l).